We begin with the raw amino-acid sequence, 92 residues long: uncharacterized protein (92 aa).

A run of 3 helical transmembrane segments spans residues Met-1–Leu-21, Ile-29–Leu-49, and Ile-51–Leu-71.

It localises to the cell membrane. This is an uncharacterized protein from Methanocaldococcus jannaschii (strain ATCC 43067 / DSM 2661 / JAL-1 / JCM 10045 / NBRC 100440) (Methanococcus jannaschii).